The chain runs to 1152 residues: DNA-directed RNA polymerase subunit beta' (1152 aa).

Zn(2+)-binding residues include C60, C62, C75, and C78. D449, D451, and D453 together coordinate Mg(2+). 4 residues coordinate Zn(2+): C779, C853, C860, and C863.

The protein belongs to the RNA polymerase beta' chain family. As to quaternary structure, the RNAP catalytic core consists of 2 alpha, 1 beta, 1 beta' and 1 omega subunit. When a sigma factor is associated with the core the holoenzyme is formed, which can initiate transcription. Mg(2+) serves as cofactor. It depends on Zn(2+) as a cofactor.

The catalysed reaction is RNA(n) + a ribonucleoside 5'-triphosphate = RNA(n+1) + diphosphate. DNA-dependent RNA polymerase catalyzes the transcription of DNA into RNA using the four ribonucleoside triphosphates as substrates. This Carboxydothermus hydrogenoformans (strain ATCC BAA-161 / DSM 6008 / Z-2901) protein is DNA-directed RNA polymerase subunit beta'.